Reading from the N-terminus, the 198-residue chain is V-type proton ATPase subunit E (198 aa).

It belongs to the V-ATPase E subunit family.

Produces ATP from ADP in the presence of a proton gradient across the membrane. The polypeptide is V-type proton ATPase subunit E (Borrelia duttonii (strain Ly)).